Here is a 306-residue protein sequence, read N- to C-terminus: Low-density lipoprotein receptor class A domain-containing protein 4 (306 aa).

Topologically, residues 1–64 (MPEAGFQATN…PPGIFNSELE (64 aa)) are lumenal. An LDL-receptor class A domain is found at 16–48 (KFTCTSGKCLYLGSLVCNQQNDCGDNSDEENCL). 2 disulfide bridges follow: cysteine 19–cysteine 38 and cysteine 32–cysteine 47. A helical membrane pass occupies residues 65–85 (FAQIIIIVVVVTVMVVVIVCL). The Cytoplasmic segment spans residues 86 to 306 (LNHYKVSTRS…GKDRKPGNLV (221 aa)). The short motif at 180-183 (PPPY) is the PPxY motif 1 element. The SMAD interaction motif (SIM) motif lies at 208-211 (PPNR). A PPxY motif 2 motif is present at residues 252-255 (PPTY). The interval 286-306 (NNAESTIVPIKGKDRKPGNLV) is disordered. Positions 296–306 (KGKDRKPGNLV) are enriched in basic and acidic residues.

It belongs to the PMEPA1 family. Interacts with PMEPA1. Interacts (via the SMAD interaction motif) with SMAD2 and SMAD3. Expressed in lymphocytes.

It localises to the early endosome membrane. Functions as a negative regulator of TGF-beta signaling and thereby probably plays a role in cell proliferation, differentiation, apoptosis, motility, extracellular matrix production and immunosuppression. In the canonical TGF-beta pathway, ZFYVE9/SARA recruits the intracellular signal transducer and transcriptional modulators SMAD2 and SMAD3 to the TGF-beta receptor. Phosphorylated by the receptor, SMAD2 and SMAD3 then form a heteromeric complex with SMAD4 that translocates to the nucleus to regulate transcription. Through interaction with SMAD2 and SMAD3, LDLRAD4 may compete with ZFYVE9 and SMAD4 and prevent propagation of the intracellular signal. The chain is Low-density lipoprotein receptor class A domain-containing protein 4 (LDLRAD4) from Homo sapiens (Human).